A 350-amino-acid polypeptide reads, in one-letter code: Calcium uniporter protein, mitochondrial (350 aa).

A mitochondrion-targeting transit peptide spans 1–49; it reads MAAAAGRSLLLLLCSRGGGGGAGGCGALTAGCFPGLGVSRHRPHQQHRT. At 50-232 the chain is on the mitochondrial matrix side; that stretch reads AHQRPASWQS…ISRKAEKRTT (183 aa). A phosphoserine; by CaMK2 mark is found at Ser-56 and Ser-91. The interval 74–164 is N-terminal MCU domain; that stretch reads VTVVYQNGLP…LTYHVRPPKR (91 aa). Residue Cys-96 is modified to S-glutathionyl cysteine. Positions 191-220 form a coiled coil; sequence IEQHQLNKERELVERLEDLKQQLAPLEKVR. The helical transmembrane segment at 233–256 threads the bilayer; the sequence is LVLWGGLAYMATQFGILARLTWWE. Over 257 to 264 the chain is Mitochondrial intermembrane; it reads YSWDIMEP. Residues 259-267 carry the Selectivity filter motif; that stretch reads WDIMEPVTY. Glu-263 is a Ca(2+) binding site. Residues 265–282 traverse the membrane as a helical segment; it reads VTYFITYGSAMAMYAYFV. Topologically, residues 283-350 are mitochondrial matrix; the sequence is MTRQEYVYPE…LPLRQIGEKE (68 aa). Residues 284–289 are juxtamembrane helix; the sequence is TRQEYV. Residues 310-338 adopt a coiled-coil conformation; it reads RFDLEKYNQLKDAIAQAEMDLKRLRDPLQ. An N6-acetyllysine modification is found at Lys-331.

This sequence belongs to the MCU (TC 1.A.77) family. As to quaternary structure, homotetramer. Component of the uniplex complex, composed of MCU, EMRE/SMDT1, MICU1 and MICU2 (or MICU3) in a 4:4:1:1 stoichiometry. Interacts with CCDC109B/MCUB; this inhibits channel activity. Interacts with MCUR1. Interactions with MICU1 and MCUR1 are mutually exclusive. Interacts with SLC25A23. Phosphorylation by CaMK2 in heart leads to increased MCU current. The regulation of MCU by CaMK2 is however subject to discussion: another group was unable to reproduce these results. Phosphorylated on tyrosines by PTK2B/PYK2, promoting oligomerization. In terms of processing, glutathionylation at Cys-96 in response to reactive oxygen species (ROS) promotes MCU higher-order assembly, leading to constitutive activation of the MCU channel and mitochondrial calcium overload. Post-translationally, undergoes proteolytic degradation by SPG7. In terms of tissue distribution, detected in heart muscle (at protein level). Expressed in skeletal muscle, heart, kidney, liver, brain, lung, white fat and spleen.

The protein resides in the mitochondrion inner membrane. The catalysed reaction is Ca(2+)(in) = Ca(2+)(out). MCU channel activity is regulated by the heterodimer composed of MICU1 and either MICU2 or MICU3, which act as calcium-sensors. At low calcium levels, MICU1 occludes the pore of the MCU channel, preventing mitochondrial calcium uptake. At higher calcium levels, calcium-binding to MICU1 and MICU2 (or MICU3) induces a conformational change that weakens MCU-MICU1 interactions and moves the MICU1-MICU2 heterodimer away from the pore, allowing calcium permeation through the channel. MCU channel activity is gated by EMRE/SMDT1 via the juxtamembrane helix loop. Inhibited by ruthenium red or its derivative Ru360. Functionally, channel-forming and calcium-conducting subunit of the mitochondrial inner membrane calcium uniporter complex (uniplex), which mediates calcium uptake into the mitochondrial matrix. MCU channel activity is regulated by the calcium-sensor subunits of the uniplex MICU1 and MICU2 (or MICU3). Mitochondrial calcium homeostasis plays key roles in cellular physiology and regulates ATP production, cytoplasmic calcium signals and activation of cell death pathways. Involved in buffering the amplitude of systolic calcium rises in cardiomyocytes. While dispensable for baseline homeostatic cardiac function, acts as a key regulator of short-term mitochondrial calcium loading underlying a 'fight-or-flight' response during acute stress: acts by mediating a rapid increase of mitochondrial calcium in pacemaker cells. Participates in mitochondrial permeability transition during ischemia-reperfusion injury. Mitochondrial calcium uptake in skeletal muscle cells is involved in muscle size in adults. Regulates synaptic vesicle endocytosis kinetics in central nerve terminal. Regulates glucose-dependent insulin secretion in pancreatic beta-cells by regulating mitochondrial calcium uptake. Involved in antigen processing and presentation. The sequence is that of Calcium uniporter protein, mitochondrial from Mus musculus (Mouse).